We begin with the raw amino-acid sequence, 980 residues long: Hypoxia up-regulated protein 1 (980 aa).

The signal sequence occupies residues 1–24; it reads MREKLSLWAIFCLVVAFLPSQTES. Disordered stretches follow at residues 558 to 682 and 894 to 980; these read EEES…DIAV and KPKP…EDEL. Basic and acidic residues-rich tracts occupy residues 599–656 and 896–906; these read AGKE…PEEK and KPKDKAKDKNS. A compositionally biased stretch (polar residues) spans 907-916; that stretch reads TSESSKANST. Basic and acidic residues-rich tracts occupy residues 918–949 and 960–980; these read DAEKVIPPKTEDGAEKVKPAEEPPVVEEKAEE and TDDKTESTESSKSENHIEDEL. The short motif at 977–980 is the Prevents secretion from ER element; that stretch reads EDEL.

Belongs to the heat shock protein 70 family.

It is found in the endoplasmic reticulum lumen. Its function is as follows. Has a pivotal role in cytoprotective cellular mechanisms triggered by oxygen deprivation. May play a role as a molecular chaperone and participate in protein folding. This is Hypoxia up-regulated protein 1 (hyou1) from Danio rerio (Zebrafish).